The following is a 1064-amino-acid chain: Lysine-specific demethylase 4A (1064 aa).

Ala2 is modified (N-acetylalanine). Positions 14 to 56 (IMTFYPTMEEFRNFSRYIAYIESQGAHRAGLAKVVPPKEWKPR) constitute a JmjN domain. Residue Tyr132 coordinates 2-oxoglutarate. One can recognise a JmjC domain in the interval 142–308 (EKHVDEWNIG…YGKQAVLCSC (167 aa)). Residues His188 and Glu190 each contribute to the Fe cation site. Residues Asn198 and Lys206 each contribute to the 2-oxoglutarate site. Cys234 and His240 together coordinate Zn(2+). Lys241 serves as a coordination point for 2-oxoglutarate. Residue His276 participates in Fe cation binding. Residues Cys306 and Cys308 each coordinate Zn(2+). 3 disordered regions span residues 358 to 384 (ELPPRAGNEEECPEDDMEGVEDGEEGD), 501 to 537 (FSGSKKKSSSSLGSGSSRDSVSSDSETSEPLSCRAQG), and 616 to 642 (SDDETSEQLTPEEEAEETEAWAKPLSQ). Residues 366-382 (EEECPEDDMEGVEDGEE) are compositionally biased toward acidic residues. Low complexity predominate over residues 509 to 532 (SSSLGSGSSRDSVSSDSETSEPLS). A Phosphoserine modification is found at Ser523. An interaction with NCOR1 region spans residues 597 to 638 (RQPLSKLPRHHPLVLQECVSDDETSEQLTPEEEAEETEAWAK). Acidic residues predominate over residues 616 to 634 (SDDETSEQLTPEEEAEETE). A PHD-type 1 zinc finger spans residues 709 to 767 (MCFTSTGCGTDINLSTPYLEEDGTSILVSCKKCSVRVHASCYGVPPAKASEDWMCSRCS). Residues 772–805 (EEDCCLCSLRGGALQRANDDRWVHVSCAVAILEA) form a C2HC pre-PHD-type zinc finger. The PHD-type 2 zinc finger occupies 828–885 (LKCIFCKKRRKRTAGCCVQCSHGRCPTAFHVSCAQAAGVMMQPDDWPFVVFITCFRHK). Tudor domains follow at residues 897–954 (QSIT…CLQF) and 955–1011 (GPPA…EELP).

This sequence belongs to the JHDM3 histone demethylase family. As to quaternary structure, interacts with histone deacetylase proteins HDAC1, HDAC2 and HDAC3. Interacts with RB and NCOR1. Interacts with VRK1. Requires Fe(2+) as cofactor. In terms of processing, ubiquitinated by RNF8 and RNF168, leading to its degradation. Degradation promotes accessibility of H4K20me2 mark for DNA repair protein TP53BP1, which is then recruited. Also ubiquitinated by the SCF(FBXO22) complex; leading to proteasomal degradation.

It is found in the nucleus. The enzyme catalyses N(6),N(6),N(6)-trimethyl-L-lysyl(9)-[histone H3] + 2 2-oxoglutarate + 2 O2 = N(6)-methyl-L-lysyl(9)-[histone H3] + 2 formaldehyde + 2 succinate + 2 CO2. The catalysed reaction is N(6),N(6),N(6)-trimethyl-L-lysyl(36)-[histone H3] + 2 2-oxoglutarate + 2 O2 = N(6)-methyl-L-lysyl(36)-[histone H3] + 2 formaldehyde + 2 succinate + 2 CO2. Histone demethylase that specifically demethylates 'Lys-9' and 'Lys-36' residues of histone H3, thereby playing a central role in histone code. Does not demethylate histone H3 'Lys-4', H3 'Lys-27' nor H4 'Lys-20'. Demethylates trimethylated H3 'Lys-9' and H3 'Lys-36' residue, while it has no activity on mono- and dimethylated residues. Demethylation of Lys residue generates formaldehyde and succinate. Participates in transcriptional repression of ASCL2 and E2F-responsive promoters via the recruitment of histone deacetylases and NCOR1, respectively. The sequence is that of Lysine-specific demethylase 4A (KDM4A) from Pongo abelii (Sumatran orangutan).